We begin with the raw amino-acid sequence, 344 residues long: Lipase chaperone (344 aa).

Residues 14 to 34 form a helical membrane-spanning segment; sequence AMVYGVVGLAAIAGVAMWSGA.

Belongs to the lipase chaperone family.

It is found in the cell inner membrane. May be involved in the folding of the extracellular lipase during its passage through the periplasm. This chain is Lipase chaperone, found in Burkholderia lata (strain ATCC 17760 / DSM 23089 / LMG 22485 / NCIMB 9086 / R18194 / 383).